Reading from the N-terminus, the 386-residue chain is Cytochrome b (386 aa).

Transmembrane regions (helical) follow at residues 32 to 52 (LGSLLGLCLVIQICTGIFLAM), 76 to 98 (WFIRYAHANGASFFFICMYIHIG), 113 to 133 (VWNVGVIIFVLTMAAAFLGYC), and 179 to 199 (FFAFHYLVPFIIAAFVIMHFM). Heme b is bound by residues His-82 and His-96. Residues His-183 and His-197 each contribute to the heme b site. His-202 contributes to the a ubiquinone binding site. The next 4 helical transmembrane spans lie at 225–245 (FIFKDLITVFVFLFFFSLFVF), 289–309 (LLGVLAMFGAILILLVLPITD), 321–341 (FSKFFFFLFIANFVLLGHLGE), and 348–368 (FVVMGQIATVIYFAYFLVIVP).

This sequence belongs to the cytochrome b family. In terms of assembly, fungal cytochrome b-c1 complex contains 10 subunits; 3 respiratory subunits, 2 core proteins and 5 low-molecular weight proteins. Cytochrome b-c1 complex is a homodimer. It depends on heme b as a cofactor.

The protein localises to the mitochondrion inner membrane. In terms of biological role, component of the ubiquinol-cytochrome c reductase complex (complex III or cytochrome b-c1 complex) that is part of the mitochondrial respiratory chain. The b-c1 complex mediates electron transfer from ubiquinol to cytochrome c. Contributes to the generation of a proton gradient across the mitochondrial membrane that is then used for ATP synthesis. The protein is Cytochrome b (COB) of Kluyveromyces lactis (strain ATCC 8585 / CBS 2359 / DSM 70799 / NBRC 1267 / NRRL Y-1140 / WM37) (Yeast).